The chain runs to 711 residues: T-box transcription factor TBX2 (711 aa).

A DNA-binding region (T-box) is located at residues 109–287; that stretch reads LEAKELWDQF…NNPFAKGFRD (179 aa). The disordered stretch occupies residues 313–449; sequence PERDGAESDA…GEGKEPSLAP (137 aa). Residues 326–340 show a composition bias toward pro residues; sequence DPPPAREPPPSPSAA. S336, S342, and S360 each carry phosphoserine. 3 stretches are compositionally biased toward basic and acidic residues: residues 363-372, 390-409, and 421-444; these read EPERTGEERS, TEPE…KEPT, and SLEK…EGKE. The repression domain 1 (RD1) stretch occupies residues 518 to 602; the sequence is GSGSSGGAGP…ATSAAAAAAA (85 aa). Phosphoserine is present on residues S623, S652, S656, and S675. The segment at 640–687 is disordered; the sequence is TGLAAEGSKGGNSREPSPLPELALRKVGGPSRGALSPSGSAKEAASEL.

In terms of assembly, binds DNA as a monomer. Interacts with CHD4, HDAC1 and HDAC2, perhaps as components of a NuRD-like complex. Interacts with CBX3, HMGB2 and PBX1. Interacts with PML. In terms of processing, phosphorylated. May be phosphorylated by p38 MAPK in response to UV irradiation stress. As to expression, in adults, highest levels in lung. Also found in heart, kidney, and ovary.

It localises to the nucleus. In terms of biological role, transcription factor which acts as a transcriptional repressor. May also function as a transcriptional activator. Binds to the palindromic T site 5'-TTCACACCTAGGTGTGAA-3' DNA sequence, or a half-site, which are present in the regulatory region of several genes. Required for cardiac atrioventricular canal formation. May cooperate with NKX2.5 to negatively modulate expression of NPPA/ANF in the atrioventricular canal. May play a role as a positive regulator of TGFB2 expression, perhaps acting in concert with GATA4 in the developing outflow tract myocardium. Plays a role in limb pattern formation. Acts as a transcriptional repressor of ADAM10 gene expression, perhaps in concert with histone deacetylase HDAC1 as cofactor. Involved in branching morphogenesis in both developing lungs and adult mammary glands, via negative modulation of target genes; acting redundantly with TBX3. Required, together with TBX3, to maintain cell proliferation in the embryonic lung mesenchyme; perhaps acting downstream of SHH, BMP and TGFbeta signaling. Involved in modulating early inner ear development, acting independently of, and also redundantly with TBX3, in different subregions of the developing ear. Acts as a negative regulator of PML function in cellular senescence. Acts as a negative regulator of expression of CDKN1A/p21, IL33 and CCN4; repression of CDKN1A is enhanced in response to UV-induced stress, perhaps as a result of phosphorylation by p38 MAPK. Negatively modulates expression of CDKN2A/p19ARF and CDH1/E-cadherin. Plays a role in induction of the epithelial-mesenchymal transition (EMT). Plays a role in melanocyte proliferation, perhaps via regulation of cyclin CCND1. Involved in melanogenesis, acting via negative modulation of expression of DHICA oxidase/TYRP1 and P protein/OCA2. Involved in regulating retinal pigment epithelium (RPE) cell proliferation, perhaps via negatively modulating transcription of the transcription factor CEBPD. In Mus musculus (Mouse), this protein is T-box transcription factor TBX2 (Tbx2).